The primary structure comprises 438 residues: Serine hydroxymethyltransferase (438 aa).

(6S)-5,6,7,8-tetrahydrofolate is bound by residues Leu-119 and Gly-123–Leu-125. Lys-228 is subject to N6-(pyridoxal phosphate)lysine. Ser-370–Phe-372 serves as a coordination point for (6S)-5,6,7,8-tetrahydrofolate.

The protein belongs to the SHMT family. Homodimer. Pyridoxal 5'-phosphate serves as cofactor.

It localises to the cytoplasm. The enzyme catalyses (6R)-5,10-methylene-5,6,7,8-tetrahydrofolate + glycine + H2O = (6S)-5,6,7,8-tetrahydrofolate + L-serine. It functions in the pathway one-carbon metabolism; tetrahydrofolate interconversion. It participates in amino-acid biosynthesis; glycine biosynthesis; glycine from L-serine: step 1/1. In terms of biological role, catalyzes the reversible interconversion of serine and glycine with tetrahydrofolate (THF) serving as the one-carbon carrier. This reaction serves as the major source of one-carbon groups required for the biosynthesis of purines, thymidylate, methionine, and other important biomolecules. Also exhibits THF-independent aldolase activity toward beta-hydroxyamino acids, producing glycine and aldehydes, via a retro-aldol mechanism. This chain is Serine hydroxymethyltransferase, found in Chlorobium chlorochromatii (strain CaD3).